A 312-amino-acid polypeptide reads, in one-letter code: Acetyl-coenzyme A carboxylase carboxyl transferase subunit alpha (312 aa).

One can recognise a CoA carboxyltransferase C-terminal domain in the interval 36–286 (RLDKEVKSIY…KEYFLDALRT (251 aa)).

Belongs to the AccA family. In terms of assembly, acetyl-CoA carboxylase is a heterohexamer composed of biotin carboxyl carrier protein (AccB), biotin carboxylase (AccC) and two subunits each of ACCase subunit alpha (AccA) and ACCase subunit beta (AccD).

It is found in the cytoplasm. It catalyses the reaction N(6)-carboxybiotinyl-L-lysyl-[protein] + acetyl-CoA = N(6)-biotinyl-L-lysyl-[protein] + malonyl-CoA. It participates in lipid metabolism; malonyl-CoA biosynthesis; malonyl-CoA from acetyl-CoA: step 1/1. Functionally, component of the acetyl coenzyme A carboxylase (ACC) complex. First, biotin carboxylase catalyzes the carboxylation of biotin on its carrier protein (BCCP) and then the CO(2) group is transferred by the carboxyltransferase to acetyl-CoA to form malonyl-CoA. The polypeptide is Acetyl-coenzyme A carboxylase carboxyl transferase subunit alpha (Helicobacter pylori (strain HPAG1)).